The following is a 526-amino-acid chain: Keratin, type I cytoskeletal 10 (526 aa).

Over residues 1–16 the composition is skewed to low complexity; sequence MSVRFSSNSRQYSSAR. Positions 1 to 40 are disordered; the sequence is MSVRFSSNSRQYSSARSGGGGGGGGGGSSIRVSSTKSSLG. The interval 1 to 144 is head; that stretch reads MSVRFSSNSR…GDGGGLLSGN (144 aa). A phosphoserine mark is found at Ser17, Ser38, Ser49, Ser52, and Ser169. Residues 17–28 are compositionally biased toward gly residues; the sequence is SGGGGGGGGGGS. A coil 1A region spans residues 145-180; that stretch reads EKVTMQNLNDRLASYMNKVRDLEESNYELEGKIKEW. The IF rod domain occupies 145-459; the sequence is EKVTMQNLND…SLLEGEGGYV (315 aa). Residues 181 to 201 are linker 1; it reads YEKHGNSSQREPRDYSKYYKT. Positions 202 to 293 are coil 1B; it reads IEDLKGQIVN…KNHEEEMKDL (92 aa). A linker 12 region spans residues 294–316; it reads QNVSTGDVNVEMNAAPGVDLTQL. Residues 317-455 are coil 2; the sequence is LNNMRNQYEQ…QTYRSLLEGE (139 aa). A tail region spans residues 456 to 526; that stretch reads GGYVGNLQIT…IESETKKHFY (71 aa).

Belongs to the intermediate filament family. In terms of assembly, heterotetramer of two type I and two type II keratins. Heterodimer with KRT1. Two heterodimers of KRT1 and KRT10 form a heterotetramer. The KRT10 subunit in the heterotetramer is probably disulfide-linked.

The protein resides in the secreted. Its subcellular location is the extracellular space. The protein localises to the cell surface. It is found in the cytoplasm. In terms of biological role, plays a role in the establishment of the epidermal barrier on plantar skin. Involved in the maintenance of cell layer development and keratin filament bundles in suprabasal cells of the epithelium. The chain is Keratin, type I cytoskeletal 10 from Rattus norvegicus (Rat).